Consider the following 199-residue polypeptide: Lysine exporter LysE (199 aa).

5 helical membrane-spanning segments follow: residues 6–26, 42–62, 68–88, 144–164, and 178–198; these read VVGF…NAFV, LCTV…GALI, ALNV…LLAA, WLFG…LGFG, and WRIL…SLTV.

The protein belongs to the LysE/ArgO transporter (TC 2.A.75) family.

Its subcellular location is the cell inner membrane. Its function is as follows. Catalyzes the efflux of L-lysine. The sequence is that of Lysine exporter LysE from Mycobacterium bovis (strain ATCC BAA-935 / AF2122/97).